Here is a 255-residue protein sequence, read N- to C-terminus: FMR1 neighbor protein (255 aa).

The Cytoplasmic portion of the chain corresponds to 1–68 (MSSHRRKAKG…ESLKMRVSKP (68 aa)). The chain crosses the membrane as a helical span at residues 69–89 (FGMLMLSIWILLFVCYYLSYY). Over 90 to 183 (LCSGSSYFVL…FAPFRDVPKQ (94 aa)) the chain is Extracellular. The region spanning 125–184 (LLNFFFPTTCNLRENQVAKPCNELQDLSESECLRHKCCFSSSGTTSFKCFAPFRDVPKQM) is the P-type domain. A helical membrane pass occupies residues 184–204 (MMQMFGLGAISLILVCLPIYC). The Cytoplasmic segment spans residues 205-255 (RSLFWRSEPADDLQRQDNRVVTGLKKQRRKRKRKSEMLQKAARGREEHGDE). Residues 220 to 255 (QDNRVVTGLKKQRRKRKRKSEMLQKAARGREEHGDE) are disordered. A compositionally biased stretch (basic residues) spans 229-238 (KKQRRKRKRK).

As to expression, testis-specific. Expressed in melanoma, sarcoma, lung, breast, bladder, esophageal and ovarian cancers.

It localises to the membrane. This is FMR1 neighbor protein from Homo sapiens (Human).